A 122-amino-acid polypeptide reads, in one-letter code: MARIAGVNIPTNKRVVIALTYIHGIGNTKAKEICGTVGIPAERRVNELTDAEVIQIREAIDRDYLVEGDLRREVSMNIKRLMDLGCYRGLRHRKGLPVRGQRTHTNARTRKGPAKAIAGKKK.

The disordered stretch occupies residues 99 to 122; it reads RGQRTHTNARTRKGPAKAIAGKKK.

This sequence belongs to the universal ribosomal protein uS13 family. As to quaternary structure, part of the 30S ribosomal subunit. Forms a loose heterodimer with protein S19. Forms two bridges to the 50S subunit in the 70S ribosome.

Its function is as follows. Located at the top of the head of the 30S subunit, it contacts several helices of the 16S rRNA. In the 70S ribosome it contacts the 23S rRNA (bridge B1a) and protein L5 of the 50S subunit (bridge B1b), connecting the 2 subunits; these bridges are implicated in subunit movement. Contacts the tRNAs in the A and P-sites. The sequence is that of Small ribosomal subunit protein uS13 from Parvibaculum lavamentivorans (strain DS-1 / DSM 13023 / NCIMB 13966).